The chain runs to 312 residues: Olfactory receptor 1D5 (312 aa).

The Extracellular portion of the chain corresponds to 1–25 (MDGDNQSENSQFLLLGISESPEQQQ). An N-linked (GlcNAc...) asparagine glycan is attached at Asn5. The helical transmembrane segment at 26–49 (ILFWMFLSMYLVTVLGNVLIILAI) threads the bilayer. The Cytoplasmic portion of the chain corresponds to 50-57 (SSDSHLHT). The helical transmembrane segment at 58 to 79 (PMYFFLANLSFTDLFFVTNTIP) threads the bilayer. Over 80–100 (KMLVNFQSQNKAISYAGCLTQ) the chain is Extracellular. Cys97 and Cys189 are oxidised to a cystine. A helical membrane pass occupies residues 101-120 (LYFLVSLVTLDNLILAVMAY). The Cytoplasmic segment spans residues 121-140 (DRYVAICCPLHYVTAMSPGL). The helical transmembrane segment at 141 to 158 (CVLLLSLCWGLSVLYGLL) threads the bilayer. Residues 159–196 (LTLLLTRVTFCGPREIHYLFCDMYILLRLACSNTHIIH) lie on the Extracellular side of the membrane. The helical transmembrane segment at 197 to 220 (TVLVATGCFIFLTPLGFMTTSYVC) threads the bilayer. Residues 221–237 (IVRTILQIPSASKKYKA) are Cytoplasmic-facing. Residues 238-260 (FSTCASHLGVVSLFYGTLAMVYL) traverse the membrane as a helical segment. Residues 261-271 (QPLHTYSMKDS) lie on the Extracellular side of the membrane. Residues 272-291 (VATVMYAVVTPMMNPFIYSL) form a helical membrane-spanning segment. The Cytoplasmic segment spans residues 292-312 (RNKDMHGALGRVLRRLFQRPK).

The protein belongs to the G-protein coupled receptor 1 family.

The protein localises to the cell membrane. In terms of biological role, odorant receptor. In Pan paniscus (Pygmy chimpanzee), this protein is Olfactory receptor 1D5 (OR1D5).